The following is a 445-amino-acid chain: Methylenetetrahydrofolate--tRNA-(uracil-5-)-methyltransferase TrmFO (445 aa).

An FAD-binding site is contributed by 8 to 13 (GAGLAG).

This sequence belongs to the MnmG family. TrmFO subfamily. FAD is required as a cofactor.

The protein localises to the cytoplasm. It carries out the reaction uridine(54) in tRNA + (6R)-5,10-methylene-5,6,7,8-tetrahydrofolate + NADH + H(+) = 5-methyluridine(54) in tRNA + (6S)-5,6,7,8-tetrahydrofolate + NAD(+). The enzyme catalyses uridine(54) in tRNA + (6R)-5,10-methylene-5,6,7,8-tetrahydrofolate + NADPH + H(+) = 5-methyluridine(54) in tRNA + (6S)-5,6,7,8-tetrahydrofolate + NADP(+). In terms of biological role, catalyzes the folate-dependent formation of 5-methyl-uridine at position 54 (M-5-U54) in all tRNAs. The chain is Methylenetetrahydrofolate--tRNA-(uracil-5-)-methyltransferase TrmFO from Rhodobacter capsulatus (strain ATCC BAA-309 / NBRC 16581 / SB1003).